The sequence spans 122 residues: S-adenosylmethionine decarboxylase proenzyme (122 aa).

Serine 69 functions as the Schiff-base intermediate with substrate; via pyruvic acid in the catalytic mechanism. Serine 69 is modified (pyruvic acid (Ser); by autocatalysis). Histidine 74 functions as the Proton acceptor; for processing activity in the catalytic mechanism. The active-site Proton donor; for catalytic activity is the cysteine 89.

Belongs to the prokaryotic AdoMetDC family. Type 1 subfamily. As to quaternary structure, heterotetramer of two alpha and two beta chains arranged as a dimer of alpha/beta heterodimers. The cofactor is pyruvate. Is synthesized initially as an inactive proenzyme. Formation of the active enzyme involves a self-maturation process in which the active site pyruvoyl group is generated from an internal serine residue via an autocatalytic post-translational modification. Two non-identical subunits are generated from the proenzyme in this reaction, and the pyruvate is formed at the N-terminus of the alpha chain, which is derived from the carboxyl end of the proenzyme. The post-translation cleavage follows an unusual pathway, termed non-hydrolytic serinolysis, in which the side chain hydroxyl group of the serine supplies its oxygen atom to form the C-terminus of the beta chain, while the remainder of the serine residue undergoes an oxidative deamination to produce ammonia and the pyruvoyl group blocking the N-terminus of the alpha chain.

The enzyme catalyses S-adenosyl-L-methionine + H(+) = S-adenosyl 3-(methylsulfanyl)propylamine + CO2. It functions in the pathway amine and polyamine biosynthesis; S-adenosylmethioninamine biosynthesis; S-adenosylmethioninamine from S-adenosyl-L-methionine: step 1/1. Functionally, catalyzes the decarboxylation of S-adenosylmethionine to S-adenosylmethioninamine (dcAdoMet), the propylamine donor required for the synthesis of the polyamines spermine and spermidine from the diamine putrescine. The sequence is that of S-adenosylmethionine decarboxylase proenzyme from Sulfolobus acidocaldarius (strain ATCC 33909 / DSM 639 / JCM 8929 / NBRC 15157 / NCIMB 11770).